A 1002-amino-acid chain; its full sequence is DNA-directed RNA polymerase 1, mitochondrial (1002 aa).

Residues 1–21 constitute a mitochondrion transit peptide; it reads MWRYISKQAYSRKFRNSHDSA. Catalysis depends on residues Asp-703, Lys-778, and Asp-935.

This sequence belongs to the phage and mitochondrial RNA polymerase family. In terms of tissue distribution, the highest levels of expression are detected in the mature leaves. The level of expression is lowest in the cotyledons.

It localises to the mitochondrion. The enzyme catalyses RNA(n) + a ribonucleoside 5'-triphosphate = RNA(n+1) + diphosphate. DNA-dependent RNA polymerase catalyzes the transcription of DNA into RNA using the four ribonucleoside triphosphates as substrates. The polypeptide is DNA-directed RNA polymerase 1, mitochondrial (RPOT1) (Nicotiana sylvestris (Wood tobacco)).